The following is a 729-amino-acid chain: Fatty acid oxidation complex subunit alpha (729 aa).

The segment at 1–189 (MLYKGDTLYL…KIGLVDGVVK (189 aa)) is enoyl-CoA hydratase/isomerase. Position 296 (D296) interacts with substrate. The 3-hydroxyacyl-CoA dehydrogenase stretch occupies residues 311 to 729 (ETPKQAAVLG…ARPVGSLKTA (419 aa)). NAD(+) is bound by residues M324, D343, 400–402 (VVE), K407, and S429. The active-site For 3-hydroxyacyl-CoA dehydrogenase activity is the H450. NAD(+) is bound at residue N453. N500 and Y660 together coordinate substrate. Residues 708–729 (RHNEPYYPPVEPARPVGSLKTA) are disordered.

It in the N-terminal section; belongs to the enoyl-CoA hydratase/isomerase family. The protein in the C-terminal section; belongs to the 3-hydroxyacyl-CoA dehydrogenase family. In terms of assembly, heterotetramer of two alpha chains (FadB) and two beta chains (FadA).

The enzyme catalyses a (3S)-3-hydroxyacyl-CoA + NAD(+) = a 3-oxoacyl-CoA + NADH + H(+). It catalyses the reaction a (3S)-3-hydroxyacyl-CoA = a (2E)-enoyl-CoA + H2O. The catalysed reaction is a 4-saturated-(3S)-3-hydroxyacyl-CoA = a (3E)-enoyl-CoA + H2O. It carries out the reaction (3S)-3-hydroxybutanoyl-CoA = (3R)-3-hydroxybutanoyl-CoA. The enzyme catalyses a (3Z)-enoyl-CoA = a 4-saturated (2E)-enoyl-CoA. It catalyses the reaction a (3E)-enoyl-CoA = a 4-saturated (2E)-enoyl-CoA. The protein operates within lipid metabolism; fatty acid beta-oxidation. Involved in the aerobic and anaerobic degradation of long-chain fatty acids via beta-oxidation cycle. Catalyzes the formation of 3-oxoacyl-CoA from enoyl-CoA via L-3-hydroxyacyl-CoA. It can also use D-3-hydroxyacyl-CoA and cis-3-enoyl-CoA as substrate. The polypeptide is Fatty acid oxidation complex subunit alpha (Salmonella choleraesuis (strain SC-B67)).